The primary structure comprises 419 residues: UDP-N-acetylglucosamine 1-carboxyvinyltransferase 2 (419 aa).

24–25 (KN) serves as a coordination point for phosphoenolpyruvate. Arg94 serves as a coordination point for UDP-N-acetyl-alpha-D-glucosamine. Residue Cys118 is the Proton donor of the active site. A 2-(S-cysteinyl)pyruvic acid O-phosphothioketal modification is found at Cys118. UDP-N-acetyl-alpha-D-glucosamine-binding positions include 123–127 (RPIDQ), Asp307, and Ile329.

This sequence belongs to the EPSP synthase family. MurA subfamily.

It localises to the cytoplasm. It carries out the reaction phosphoenolpyruvate + UDP-N-acetyl-alpha-D-glucosamine = UDP-N-acetyl-3-O-(1-carboxyvinyl)-alpha-D-glucosamine + phosphate. It participates in cell wall biogenesis; peptidoglycan biosynthesis. Cell wall formation. Adds enolpyruvyl to UDP-N-acetylglucosamine. The protein is UDP-N-acetylglucosamine 1-carboxyvinyltransferase 2 of Staphylococcus aureus (strain MSSA476).